Reading from the N-terminus, the 334-residue chain is Tryptophan--tRNA ligase (334 aa).

ATP-binding positions include 11–13 (QPS) and 19–20 (GN). The short motif at 12–20 (PSGELTIGN) is the 'HIGH' region element. An L-tryptophan-binding site is contributed by D135. ATP contacts are provided by residues 147–149 (GED), V186, and 195–199 (KMSKS). A 'KMSKS' region motif is present at residues 195–199 (KMSKS).

This sequence belongs to the class-I aminoacyl-tRNA synthetase family. In terms of assembly, homodimer.

The protein resides in the cytoplasm. It carries out the reaction tRNA(Trp) + L-tryptophan + ATP = L-tryptophyl-tRNA(Trp) + AMP + diphosphate + H(+). Catalyzes the attachment of tryptophan to tRNA(Trp). Amino acylates tRNA(Trp) with both L- and D-tryptophan, although D-tryptophan is a poor substrate. This is Tryptophan--tRNA ligase from Escherichia coli (strain K12).